The following is a 127-amino-acid chain: Large ribosomal subunit protein bL21 (127 aa).

The protein belongs to the bacterial ribosomal protein bL21 family. As to quaternary structure, part of the 50S ribosomal subunit. Contacts protein L20.

In terms of biological role, this protein binds to 23S rRNA in the presence of protein L20. The protein is Large ribosomal subunit protein bL21 of Blochmanniella floridana.